Here is a 339-residue protein sequence, read N- to C-terminus: Dihydroorotase (339 aa).

Positions 12 and 14 each coordinate Zn(2+). Residues 14–16 and asparagine 40 each bind substrate; that span reads HVR. Residues lysine 94, histidine 133, histidine 167, and aspartate 239 each coordinate Zn(2+). N6-carboxylysine is present on lysine 94. Residue histidine 133 coordinates substrate. Aspartate 239 is an active-site residue. Positions 243 and 255 each coordinate substrate.

This sequence belongs to the metallo-dependent hydrolases superfamily. DHOase family. Class II DHOase subfamily. In terms of assembly, homodimer. The cofactor is Zn(2+).

It carries out the reaction (S)-dihydroorotate + H2O = N-carbamoyl-L-aspartate + H(+). Its pathway is pyrimidine metabolism; UMP biosynthesis via de novo pathway; (S)-dihydroorotate from bicarbonate: step 3/3. Catalyzes the reversible cyclization of carbamoyl aspartate to dihydroorotate. This Helicobacter pylori (strain J99 / ATCC 700824) (Campylobacter pylori J99) protein is Dihydroorotase.